Reading from the N-terminus, the 325-residue chain is Brorin (325 aa).

An N-terminal signal peptide occupies residues 1–27 (MPSSTAMAVGALSSSLLVTCCLMVALC). Positions 37-121 (AQAPEQPGQE…RPRGDTPQAE (85 aa)) are disordered. Basic and acidic residues-rich tracts occupy residues 44 to 56 (GQEK…RDGP) and 64 to 78 (RPAR…DWKS). Positions 114–116 (RGD) match the Mediates cell adhesion motif. VWFC domains lie at 153–212 (KGCV…PQCK) and 216–274 (NYCE…PICK).

Peripherally associated with AMPAR complex. AMPAR complex consists of an inner core made of 4 pore-forming GluA/GRIA proteins (GRIA1, GRIA2, GRIA3 and GRIA4) and 4 major auxiliary subunits arranged in a twofold symmetry. One of the two pairs of distinct binding sites is occupied either by CNIH2, CNIH3 or CACNG2, CACNG3. The other harbors CACNG2, CACNG3, CACNG4, CACNG8 or GSG1L. This inner core of AMPAR complex is complemented by outer core constituents binding directly to the GluA/GRIA proteins at sites distinct from the interaction sites of the inner core constituents. Outer core constituents include at least PRRT1, PRRT2, CKAMP44/SHISA9, FRRS1L and NRN1. The proteins of the inner and outer core serve as a platform for other, more peripherally associated AMPAR constituents, including VWC2. Alone or in combination, these auxiliary subunits control the gating and pharmacology of the AMPAR complex and profoundly impact their biogenesis and protein processing.

The protein resides in the secreted. The protein localises to the extracellular space. It is found in the extracellular matrix. Its subcellular location is the basement membrane. It localises to the synapse. BMP antagonist which may play a role in neural development. Promotes cell adhesion. The protein is Brorin (VWC2) of Homo sapiens (Human).